The sequence spans 78 residues: Gas vesicle protein G (78 aa).

This sequence belongs to the gas vesicle GvpG family.

Its subcellular location is the gas vesicle. Functionally, might be a minor component of the gas vesicle involved in nucleating their formation. Gas vesicles are hollow, gas filled proteinaceous nanostructures found in some microorganisms. It is not clear what function gas vesicles perform in soil bacteria. In Streptomyces sp. (strain CB03234), this protein is Gas vesicle protein G.